A 250-amino-acid chain; its full sequence is Intermembrane phospholipid transport system lipoprotein MlaA (250 aa).

Positions 1-18 (MKTKTILTALLSAIALTG) are cleaved as a signal peptide. Cys19 is lipidated: N-palmitoyl cysteine. A lipid anchor (S-diacylglycerol cysteine) is attached at Cys19.

This sequence belongs to the MlaA family.

The protein localises to the cell outer membrane. Functionally, involved in a phospholipid transport pathway that maintains lipid asymmetry in the outer membrane by retrograde trafficking of phospholipids from the outer membrane to the inner membrane. This is Intermembrane phospholipid transport system lipoprotein MlaA from Haemophilus influenzae (strain ATCC 51907 / DSM 11121 / KW20 / Rd).